The following is a 345-amino-acid chain: Putative RING-H2 finger protein ATL36 (345 aa).

An N-terminal signal peptide occupies residues 1 to 31 (MNIFTRYHLPRVVSGVILPLFLFHLLPYVTC). A helical transmembrane segment spans residues 50–70 (SIIAIVVLAIFISLGMVSCCL). The RING-type; atypical zinc-finger motif lies at 123–165 (CAICLSEFEDQETLRWMPPCSHTFHANCIDVWLSSWSTCPVCR). A Phosphoserine modification is found at Ser264.

This sequence belongs to the RING-type zinc finger family. ATL subfamily.

It localises to the membrane. It catalyses the reaction S-ubiquitinyl-[E2 ubiquitin-conjugating enzyme]-L-cysteine + [acceptor protein]-L-lysine = [E2 ubiquitin-conjugating enzyme]-L-cysteine + N(6)-ubiquitinyl-[acceptor protein]-L-lysine.. Its pathway is protein modification; protein ubiquitination. The polypeptide is Putative RING-H2 finger protein ATL36 (ATL36) (Arabidopsis thaliana (Mouse-ear cress)).